Reading from the N-terminus, the 779-residue chain is Cell division control protein 4 (779 aa).

The segment at 39–80 (AGTHRNSSTAKTVETEDGEEDIDEYQRKRAAGSGESTPERSD) is disordered. The short motif at 82 to 85 (KRVK) is the Nuclear localization signal element. Ser-104 bears the Phosphoserine mark. Residues 272-319 (RDLITSLPFEISLKIFNYLQFEDIINSLGVSQNWNKIIRKSTSLWKKL) enclose the F-box domain. WD repeat units lie at residues 380–408 (HMTSVITCLQFEDNYVITGADDKMIRVYD), 420–449 (GHDGGVWALKYAHGGILVSGSTDRTVRVWD), 461–493 (GHNSTVRCLDIVEYKNIKYIVTGSRDNTLHVWK), 528–556 (GHMASVRTVSGHGNIVVSGSYDNTLIVWD), 568–598 (GHTDRIYSTIYDHERKRCISASMDTTIRIWD), 630–658 (GHTALVGLLRLSDKFLVSAAADGSIRGWD), and 669–698 (HHTNLSAITTFYVSDNILVSGSENQFNIYN).

In terms of assembly, interacts with DCD53 and SKP1. Component of the SCF(CDC4) complex containing CDC53, SKP1, RBX1 and CDC4. CDC34. Interacts with CDC6 and CIC1. Interacts with SIC1; the interaction involves a SIC1 double phosphorylated motif (degron). Homodimerizes; the dimerization increases SIC1 ubiquitination in vitro.

The protein localises to the nucleus. It participates in protein modification; protein ubiquitination. In terms of biological role, substrate recognition component of a SCF (SKP1-CUL1-F-box protein) E3 ubiquitin-protein ligase complex which mediates the ubiquitination and subsequent proteasomal degradation of target proteins. Recognizes and binds to phosphorylated target proteins. Directs ubiquitination of the phosphorylated CDK inhibitor SIC1. Involved in the degradation of CDC6 together with CDC34/UBC3 and CDC53, and in restricting the degradation of FAR1 to the nucleus. Is essential for initiation of DNA replication and separation of the spindle pole bodies to form the poles of the mitotic spindle. It also plays a role in bud development, fusion of zygotic nuclei after conjugation and various aspects of sporulation. Required for HTA1-HTB1 locus transcription activation. Required for G1/S and G2/M transition. The chain is Cell division control protein 4 (CDC4) from Saccharomyces cerevisiae (strain ATCC 204508 / S288c) (Baker's yeast).